A 366-amino-acid chain; its full sequence is tRNA/tmRNA (uracil-C(5))-methyltransferase (366 aa).

Positions 190, 218, 223, 239, and 299 each coordinate S-adenosyl-L-methionine. Cys324 (nucleophile) is an active-site residue. Catalysis depends on Glu358, which acts as the Proton acceptor.

Belongs to the class I-like SAM-binding methyltransferase superfamily. RNA M5U methyltransferase family. TrmA subfamily.

The catalysed reaction is uridine(54) in tRNA + S-adenosyl-L-methionine = 5-methyluridine(54) in tRNA + S-adenosyl-L-homocysteine + H(+). It carries out the reaction uridine(341) in tmRNA + S-adenosyl-L-methionine = 5-methyluridine(341) in tmRNA + S-adenosyl-L-homocysteine + H(+). Its function is as follows. Dual-specificity methyltransferase that catalyzes the formation of 5-methyluridine at position 54 (m5U54) in all tRNAs, and that of position 341 (m5U341) in tmRNA (transfer-mRNA). This Edwardsiella ictaluri (strain 93-146) protein is tRNA/tmRNA (uracil-C(5))-methyltransferase.